The chain runs to 361 residues: dTDP-glucose 4,6-dehydratase (361 aa).

Residues 11-12, 32-35, 58-59, 80-84, and Thr99 contribute to the NAD(+) site; these read FI, DKLT, DI, and LAAES. Ser84 is a binding site for substrate. Thr133 contacts substrate. Residue Asp134 is the Proton donor of the active site. Residues Glu135 and Tyr167 each act as proton acceptor in the active site. 167-171 contributes to the NAD(+) binding site; that stretch reads YSASK. Asn196 lines the substrate pocket. Asn197 is a binding site for NAD(+). Substrate is bound by residues 206 to 207, 222 to 224, Arg231, Asn266, and 296 to 300; these read KL, PIY, and DRPGH.

It belongs to the NAD(P)-dependent epimerase/dehydratase family. dTDP-glucose dehydratase subfamily. Homodimer. Requires NAD(+) as cofactor.

It catalyses the reaction dTDP-alpha-D-glucose = dTDP-4-dehydro-6-deoxy-alpha-D-glucose + H2O. Its pathway is carbohydrate biosynthesis; dTDP-L-rhamnose biosynthesis. It participates in bacterial outer membrane biogenesis; LPS O-antigen biosynthesis. Catalyzes the dehydration of dTDP-D-glucose to form dTDP-6-deoxy-D-xylo-4-hexulose via a three-step process involving oxidation, dehydration and reduction. This Shigella flexneri protein is dTDP-glucose 4,6-dehydratase (rfbB).